A 677-amino-acid chain; its full sequence is UvrABC system protein B (677 aa).

One can recognise a Helicase ATP-binding domain in the interval 24-412 (EGVLQGVPAQ…EGIVVEQVIR (389 aa)). ATP is bound at residue 37 to 44 (GVTGSGKT). The short motif at 90–113 (YYDYYQPEAYLPNSDTYIEKDLAI) is the Beta-hairpin element. The Helicase C-terminal domain occupies 429-591 (QIDDLMEEIQ…ITPQQIKKAR (163 aa)). The UVR domain occupies 636 to 671 (EKSIERTRKLMQEAAKKLEFIEAAQYRNELLKLEDL).

Belongs to the UvrB family. As to quaternary structure, forms a heterotetramer with UvrA during the search for lesions. Interacts with UvrC in an incision complex.

It is found in the cytoplasm. In terms of biological role, the UvrABC repair system catalyzes the recognition and processing of DNA lesions. A damage recognition complex composed of 2 UvrA and 2 UvrB subunits scans DNA for abnormalities. Upon binding of the UvrA(2)B(2) complex to a putative damaged site, the DNA wraps around one UvrB monomer. DNA wrap is dependent on ATP binding by UvrB and probably causes local melting of the DNA helix, facilitating insertion of UvrB beta-hairpin between the DNA strands. Then UvrB probes one DNA strand for the presence of a lesion. If a lesion is found the UvrA subunits dissociate and the UvrB-DNA preincision complex is formed. This complex is subsequently bound by UvrC and the second UvrB is released. If no lesion is found, the DNA wraps around the other UvrB subunit that will check the other stand for damage. The chain is UvrABC system protein B from Bacteroides thetaiotaomicron (strain ATCC 29148 / DSM 2079 / JCM 5827 / CCUG 10774 / NCTC 10582 / VPI-5482 / E50).